A 93-amino-acid polypeptide reads, in one-letter code: Co-chaperonin GroES (93 aa).

This sequence belongs to the GroES chaperonin family. In terms of assembly, heptamer of 7 subunits arranged in a ring. Interacts with the chaperonin GroEL.

Its subcellular location is the cytoplasm. Its function is as follows. Together with the chaperonin GroEL, plays an essential role in assisting protein folding. The GroEL-GroES system forms a nano-cage that allows encapsulation of the non-native substrate proteins and provides a physical environment optimized to promote and accelerate protein folding. GroES binds to the apical surface of the GroEL ring, thereby capping the opening of the GroEL channel. This is Co-chaperonin GroES from Streptococcus constellatus.